A 556-amino-acid chain; its full sequence is Double-strand-break repair protein rad21-like protein 1 (556 aa).

Belongs to the rad21 family. In terms of assembly, component of some meiotic cohesin complex composed of the SMC1 (SMC1A or SMC1B) and SMC3 heterodimer attached via their hinge domain, RAD21L which link them, and STAG3.

It is found in the nucleus. The protein localises to the chromosome. In terms of biological role, meiosis-specific component of some cohesin complex required during the initial steps of prophase I in male meiosis. Probably required during early meiosis in males for separation of sister chromatids and homologous chromosomes. Replaces RAD21 in premeiotic S phase (during early stages of prophase I), while RAD21 reappears in later stages of prophase I. Involved in synaptonemal complex assembly, synapsis initiation and crossover recombination between homologous chromosomes during prophase I. This Homo sapiens (Human) protein is Double-strand-break repair protein rad21-like protein 1 (RAD21L1).